The chain runs to 170 residues: Adenine phosphoribosyltransferase (170 aa).

The protein belongs to the purine/pyrimidine phosphoribosyltransferase family. As to quaternary structure, homodimer.

It is found in the cytoplasm. The catalysed reaction is AMP + diphosphate = 5-phospho-alpha-D-ribose 1-diphosphate + adenine. It functions in the pathway purine metabolism; AMP biosynthesis via salvage pathway; AMP from adenine: step 1/1. In terms of biological role, catalyzes a salvage reaction resulting in the formation of AMP, that is energically less costly than de novo synthesis. The protein is Adenine phosphoribosyltransferase of Thermotoga sp. (strain RQ2).